The chain runs to 225 residues: Probable septum site-determining protein MinC (225 aa).

This sequence belongs to the MinC family. Interacts with MinD and FtsZ.

In terms of biological role, cell division inhibitor that blocks the formation of polar Z ring septums. Rapidly oscillates between the poles of the cell to destabilize FtsZ filaments that have formed before they mature into polar Z rings. Prevents FtsZ polymerization. The chain is Probable septum site-determining protein MinC from Listeria monocytogenes serotype 4a (strain HCC23).